The primary structure comprises 371 residues: Loganic acid O-methyltransferase (371 aa).

Tyr31 serves as a coordination point for S-adenosyl-L-homocysteine. Tyr37 and Gln38 together coordinate loganate. Residues Cys78, Asn83, Asp114, His115, Ser141, and Phe142 each contribute to the S-adenosyl-L-homocysteine site. Loganate-binding residues include His162 and Trp163. Mg(2+) is bound at residue Asn180. Loganate is bound by residues Ala241 and His245. Mg(2+) contacts are provided by Asp267, Phe269, and Asn270. The loganate site is built by Gln273 and Gln316.

The protein belongs to the methyltransferase superfamily. Type-7 methyltransferase family. Homodimer. Requires Mg(2+) as cofactor. As to expression, expressed in leaves (especially in leaf epidermis), flowers, siliques and stems, and, at low levels, in hairy roots.

The enzyme catalyses loganate + S-adenosyl-L-methionine = loganin + S-adenosyl-L-homocysteine. It participates in alkaloid biosynthesis. Its activity is regulated as follows. Strongly repressed by loganin and slightly by S-adenosyl-L-homocysteine. Component of the seco-iridoid and derivatives monoterpenoid indole alkaloids (MIAs, e.g. vinblastine and ajmalicine) biosynthesis pathway. Catalyzes the methylation of loganic acid (6S,7R) to produce loganin. Weak activity with secologanic acid as substrate. Inactive on deoxyloganic, dehydrologanic, epiloganic and loganetic acid. In Catharanthus roseus (Madagascar periwinkle), this protein is Loganic acid O-methyltransferase.